Reading from the N-terminus, the 513-residue chain is 2-isopropylmalate synthase (513 aa).

The region spanning 5 to 267 is the Pyruvate carboxyltransferase domain; sequence LVIFDTTLRD…ETRIDTTQIV (263 aa). Mn(2+) contacts are provided by Asp-14, His-202, His-204, and Asn-238. The tract at residues 393 to 513 is regulatory domain; sequence KLVYSRVCSE…LDKVKAQGGV (121 aa).

The protein belongs to the alpha-IPM synthase/homocitrate synthase family. LeuA type 1 subfamily. Homodimer. It depends on Mn(2+) as a cofactor.

Its subcellular location is the cytoplasm. The enzyme catalyses 3-methyl-2-oxobutanoate + acetyl-CoA + H2O = (2S)-2-isopropylmalate + CoA + H(+). It participates in amino-acid biosynthesis; L-leucine biosynthesis; L-leucine from 3-methyl-2-oxobutanoate: step 1/4. Catalyzes the condensation of the acetyl group of acetyl-CoA with 3-methyl-2-oxobutanoate (2-ketoisovalerate) to form 3-carboxy-3-hydroxy-4-methylpentanoate (2-isopropylmalate). This chain is 2-isopropylmalate synthase, found in Dechloromonas aromatica (strain RCB).